The primary structure comprises 414 residues: xyloglucan O-acetyltransferase 2 (414 aa).

The Cytoplasmic segment spans residues 1-26 (MKSSSSIFRETSEKKSERWMMMNIGR). Residues 27 to 47 (FSPFFLSSFCITLFFTGFFVY) form a helical; Signal-anchor for type II membrane protein membrane-spanning segment. The Lumenal segment spans residues 48–414 (QNPFKSIADQ…FLMAIIRQLR (367 aa)). Cystine bridges form between Cys70-Cys120, Cys91-Cys156, Cys100-Cys394, and Cys317-Cys390. An N-linked (GlcNAc...) asparagine glycan is attached at Asn88. Positions 143 to 145 (GDS) match the GDS motif motif. The Nucleophile role is filled by Ser145. 3 N-linked (GlcNAc...) asparagine glycosylation sites follow: Asn205, Asn263, and Asn308. Residue Asp389 is the Proton donor of the active site. Residues 389-392 (DCVH) carry the DXXH motif motif. Catalysis depends on His392, which acts as the Proton acceptor.

The protein belongs to the PC-esterase family. TBL subfamily.

The protein resides in the membrane. Its function is as follows. Xyloglucan acetyltransferase that catalyzes the acetylation of fucosylated Gal residues on xyloglucan side chains. Predominantly catalyze 6-O-monoacetylation of Gal residues in the Fuc-Gal-Xyl trisaccharide side chains of xyloglucan oligomers. Involved in xyloglucan specific O-acetylation in seeds. The polypeptide is xyloglucan O-acetyltransferase 2 (Arabidopsis thaliana (Mouse-ear cress)).